We begin with the raw amino-acid sequence, 197 residues long: Protein jagunal (197 aa).

The Cytoplasmic segment spans residues 1–39 (MATRGGPMVAGTDGNDFEFRQRVAGTYQISLLNKSRLKY). The chain crosses the membrane as a helical span at residues 40–60 (CIFFHALLFFVMLAKLTSDIL). At 61 to 78 (DRLDIFVLEIEELEVPSP) the chain is on the lumenal side. The helical transmembrane segment at 79–99 (LWWEYVWAGSLLTSFLGLSAA) threads the bilayer. Residues 100–109 (RGNKVREMQK) are Cytoplasmic-facing. A helical transmembrane segment spans residues 110-130 (YMIAILVFAILPLLYCFAYYF). Over 131–159 (SDVWEFATMDKSVELDETDIFIWRGYPYG) the chain is Lumenal. Residues 160–180 (VFWYAFCFVGFQVHGFTLYFA) traverse the membrane as a helical segment. Over 181-197 (YNLVKVWKARTATRKFQ) the chain is Cytoplasmic.

It belongs to the jagunal family.

Its subcellular location is the endoplasmic reticulum membrane. In terms of biological role, required for endoplasmic reticulum organization and proper vesicular traffic during vitellogenesis. Required for oocyte and bristle growth. This chain is Protein jagunal, found in Drosophila pseudoobscura pseudoobscura (Fruit fly).